Consider the following 452-residue polypeptide: tRNA-2-methylthio-N(6)-dimethylallyladenosine synthase (452 aa).

The MTTase N-terminal domain occupies 3 to 118 (KKVFIKTYGC…LPQLLAERER (116 aa)). The [4Fe-4S] cluster site is built by Cys12, Cys49, Cys81, Cys155, Cys159, and Cys162. The region spanning 141–379 (RVEGASAFVS…QTVINDSIKR (239 aa)) is the Radical SAM core domain. A TRAM domain is found at 382–445 (ESRLGTVQRI…SFTLRGEVVT (64 aa)).

It belongs to the methylthiotransferase family. MiaB subfamily. Monomer. The cofactor is [4Fe-4S] cluster.

It localises to the cytoplasm. It carries out the reaction N(6)-dimethylallyladenosine(37) in tRNA + (sulfur carrier)-SH + AH2 + 2 S-adenosyl-L-methionine = 2-methylsulfanyl-N(6)-dimethylallyladenosine(37) in tRNA + (sulfur carrier)-H + 5'-deoxyadenosine + L-methionine + A + S-adenosyl-L-homocysteine + 2 H(+). Catalyzes the methylthiolation of N6-(dimethylallyl)adenosine (i(6)A), leading to the formation of 2-methylthio-N6-(dimethylallyl)adenosine (ms(2)i(6)A) at position 37 in tRNAs that read codons beginning with uridine. The sequence is that of tRNA-2-methylthio-N(6)-dimethylallyladenosine synthase from Albidiferax ferrireducens (strain ATCC BAA-621 / DSM 15236 / T118) (Rhodoferax ferrireducens).